A 147-amino-acid chain; its full sequence is Large ribosomal subunit protein bL9 (147 aa).

It belongs to the bacterial ribosomal protein bL9 family.

In terms of biological role, binds to the 23S rRNA. In Bacteroides thetaiotaomicron (strain ATCC 29148 / DSM 2079 / JCM 5827 / CCUG 10774 / NCTC 10582 / VPI-5482 / E50), this protein is Large ribosomal subunit protein bL9.